The chain runs to 506 residues: Maturase K (506 aa).

Belongs to the intron maturase 2 family. MatK subfamily.

It localises to the plastid. Its subcellular location is the chloroplast. Functionally, usually encoded in the trnK tRNA gene intron. Probably assists in splicing its own and other chloroplast group II introns. The chain is Maturase K from Phyllodoce caerulea (Blue mountain heath).